A 333-amino-acid polypeptide reads, in one-letter code: Glyceraldehyde-3-phosphate dehydrogenase (333 aa).

NAD(+) is bound by residues 12-13, D36, R80, and S120; that span reads RI. D-glyceraldehyde 3-phosphate is bound by residues 150–152, T181, R196, 209–210, and R232; these read SCT and TG. C151 (nucleophile) is an active-site residue. N314 is an NAD(+) binding site.

The protein belongs to the glyceraldehyde-3-phosphate dehydrogenase family. Homotetramer.

Its subcellular location is the cytoplasm. It catalyses the reaction D-glyceraldehyde 3-phosphate + phosphate + NAD(+) = (2R)-3-phospho-glyceroyl phosphate + NADH + H(+). It participates in carbohydrate degradation; glycolysis; pyruvate from D-glyceraldehyde 3-phosphate: step 1/5. In terms of biological role, catalyzes the oxidative phosphorylation of glyceraldehyde 3-phosphate (G3P) to 1,3-bisphosphoglycerate (BPG) using the cofactor NAD. The first reaction step involves the formation of a hemiacetal intermediate between G3P and a cysteine residue, and this hemiacetal intermediate is then oxidized to a thioester, with concomitant reduction of NAD to NADH. The reduced NADH is then exchanged with the second NAD, and the thioester is attacked by a nucleophilic inorganic phosphate to produce BPG. This chain is Glyceraldehyde-3-phosphate dehydrogenase (gapB), found in Cereibacter sphaeroides (Rhodobacter sphaeroides).